Here is a 99-residue protein sequence, read N- to C-terminus: Small ribosomal subunit protein bS20 (99 aa).

The protein belongs to the bacterial ribosomal protein bS20 family.

Binds directly to 16S ribosomal RNA. This is Small ribosomal subunit protein bS20 from Chlamydia pneumoniae (Chlamydophila pneumoniae).